The chain runs to 188 residues: Aspartic protease inhibitor 11 (188 aa).

N-linked (GlcNAc...) asparagine glycosylation is present at asparagine 19. 3 disulfides stabilise this stretch: cysteine 48–cysteine 93, cysteine 142–cysteine 159, and cysteine 150–cysteine 153.

The protein belongs to the protease inhibitor I3 (leguminous Kunitz-type inhibitor) family.

The protein resides in the vacuole. Inhibitor of cathepsin D (aspartic protease) and trypsin (serine protease). May protect the plant by inhibiting proteases of invading organisms. This chain is Aspartic protease inhibitor 11, found in Solanum tuberosum (Potato).